The following is a 397-amino-acid chain: Tryptophan synthase beta chain (397 aa).

Lys91 is subject to N6-(pyridoxal phosphate)lysine.

It belongs to the TrpB family. As to quaternary structure, tetramer of two alpha and two beta chains. Pyridoxal 5'-phosphate serves as cofactor.

The enzyme catalyses (1S,2R)-1-C-(indol-3-yl)glycerol 3-phosphate + L-serine = D-glyceraldehyde 3-phosphate + L-tryptophan + H2O. The protein operates within amino-acid biosynthesis; L-tryptophan biosynthesis; L-tryptophan from chorismate: step 5/5. The beta subunit is responsible for the synthesis of L-tryptophan from indole and L-serine. The chain is Tryptophan synthase beta chain from Bacillus thuringiensis (strain Al Hakam).